The sequence spans 180 residues: Major urinary protein 5 (180 aa).

A signal peptide spans 1-18 (MKLLLLLCLELTLVYVHA). Cysteine 82 and cysteine 175 are joined by a disulfide.

This sequence belongs to the calycin superfamily. Lipocalin family.

The protein resides in the secreted. Its function is as follows. Major urinary proteins (Mups) bind pheromones, and thus stabilize them to allow slow release into the air from urine marks. May protect pheromones from oxidation. May also act as pheromones themselves. In this context, they play a role in the regulation of social behaviors, such as aggression, mating, pup-suckling, territory establishment and dominance. In Mus musculus (Mouse), this protein is Major urinary protein 5.